Here is a 664-residue protein sequence, read N- to C-terminus: MATYKPKNILITGAAGFIASHVANRLVRSYPDYKIVVLDKLDYCSNLKNLNPSKSSPNFKFVKGDIASADLVNYLLITEEIDTIMHFAAQTHVDNSFGNSFEFTKNNIYGTHVLLEACKVTGQIRRFIHVSTDEVYGETDEDASVGNHEASQLLPTNPYSATKAGAEMLVMAYGRSYGLPVITTRGNNVYGPNQFPEKLIPKFILLAMNGKPLPIHGDGSNVRSYLYCEDVAEAFEVVLHKGEVNHVYNIGTTRERRVIDVANDISKLFGIDPDSTIQYVENRPFNDQRYFLDDQKLKKLGWCERTNWEEGLRKTMEWYTENPEWWGDVSGALLPHPRMLMMPGDRHSDGSDEHKNADGNQTFTVVTPTKAGCSGDKRSLKFLIYGKTGWLGGLLGKLCEKQGIPYEYGKGRLEDRASLIADIRSIKPSHVFNAAGLTGRPNVDWCESHKTETIRVNVAGTLTLADVCRENDLLMMNFATGCIFEYDAAHPEGSGIGFKEEDKPNFTGSFYSKTKAMVEELLREFDNVCTLRVRMPISSDLNNPRNFITKISRYNKVVNIPNSMTILDELLPISIEMAKRNLRGIWNFTNPGVVSHNEILEMYKSYIEPDFKWSNFNLEEQAKVIVAPRSNNEMDGAKLSKEFPEMLSIKDSLIKYVFEPNKRT.

13–19 lines the NAD(+) pocket; sequence GAAGFIA. Thr-132 is a binding site for substrate. The Proton donor role is filled by Asp-133. Residues Glu-134 and Tyr-159 each act as proton acceptor in the active site. Position 386 to 392 (386 to 392) interacts with NADP(+); the sequence is GKTGWLG.

It in the N-terminal section; belongs to the NAD(P)-dependent epimerase/dehydratase family. dTDP-glucose dehydratase subfamily. In the C-terminal section; belongs to the dTDP-4-dehydrorhamnose reductase family. The cofactor is NAD(+). Requires NADP(+) as cofactor. Expressed in roots, stems, seedlings, and siliques. Lower expression in inflorescence tips, and leaves.

The enzyme catalyses UDP-alpha-D-glucose = UDP-4-dehydro-6-deoxy-alpha-D-glucose + H2O. It participates in carbohydrate biosynthesis. Trifunctional enzyme involved in UDP-beta-L-rhamnose biosynthesis, a precursor of the primary cell wall components rhamnogalacturonan I (RG-I) and rhamnogalacturonan II (RG-II). Catalyzes the dehydration of UDP-glucose to form UDP-4-dehydro-6-deoxy-D-glucose followed by the epimerization of the C3' and C5' positions of UDP-4-dehydro-6-deoxy-D-glucose to form UDP-4-keto-beta-L-rhamnose and the reduction of UDP-4-keto-beta-L-rhamnose to yield UDP-beta-L-rhamnose. The sequence is that of Trifunctional UDP-glucose 4,6-dehydratase/UDP-4-keto-6-deoxy-D-glucose 3,5-epimerase/UDP-4-keto-L-rhamnose-reductase RHM3 from Arabidopsis thaliana (Mouse-ear cress).